We begin with the raw amino-acid sequence, 444 residues long: Glutamate dehydrogenase (444 aa).

Residue Lys-124 is part of the active site.

This sequence belongs to the Glu/Leu/Phe/Val dehydrogenases family. Homohexamer.

It carries out the reaction L-glutamate + NAD(+) + H2O = 2-oxoglutarate + NH4(+) + NADH + H(+). The catalysed reaction is L-glutamate + NADP(+) + H2O = 2-oxoglutarate + NH4(+) + NADPH + H(+). This is Glutamate dehydrogenase (gdhA) from Bacteroides thetaiotaomicron (strain ATCC 29148 / DSM 2079 / JCM 5827 / CCUG 10774 / NCTC 10582 / VPI-5482 / E50).